The sequence spans 427 residues: MITDEHPFEFAPQQDEYTQLLTELHNEYCAEQPLDVLQFCSNFFIRKLEEQRLEHRNNHHSRNNLFDTNDTSNDLHPLCEQPQEDFSQQQGIQWETTHMGHPNDHGALHDDDDDPLEDEDDEEFDKFSTEPLPSLPPTNYNRGRRTSVKCREHGTQRQPRLCQGHHPQISGTSERIKVSISNNFLFRNLDEEQYLDVVNAMSEKRVVKGTTVIEQGSVGDFFYVVESGTLDCFIGQNKVTNYEAGGSFGELALMYNAPRAATIITTSDSVLWALDRNTSAPSLMENTSRKRRMYEYFLSEVVLLKSLESYEQHKIADALESVYFEDGQEVVKQGDVGDQFYIIESGEAIVLKEENGVQQQVNQLERGSYFGELALLNDAPRAATVVAHGRLKCATLGKKAFTRLLGPVLDILKRNSENYHAVINQQS.

Residues 38-184 are dimerization and phosphorylation; sequence QFCSNFFIRK…RIKVSISNNF (147 aa). Residues 96–145 are disordered; that stretch reads TTHMGHPNDHGALHDDDDDPLEDEDDEEFDKFSTEPLPSLPPTNYNRGRR. The segment covering 110-124 has biased composition (acidic residues); the sequence is DDDDDPLEDEDDEEF. Position 147 is a phosphoserine (Ser-147). Residues 185–300, Glu-250, Arg-259, 303–422, Glu-372, and Arg-381 contribute to the 3',5'-cyclic AMP site; these read LFRN…FLSE and LLKS…YHAV.

The protein belongs to the cAMP-dependent kinase regulatory chain family. In terms of assembly, tetramer, composed of 2 regulatory (R) and 2 catalytic (C) subunits. In the presence of cAMP it dissociates into 2 active monomeric C subunits and an R dimer.

The protein is cAMP-dependent protein kinase regulatory subunit (pkar) of Mucor circinelloides f. lusitanicus (Mucor racemosus var. lusitanicus).